The following is a 156-amino-acid chain: Arginine repressor (156 aa).

Belongs to the ArgR family.

It is found in the cytoplasm. It functions in the pathway amino-acid biosynthesis; L-arginine biosynthesis [regulation]. In terms of biological role, regulates arginine biosynthesis genes. This is Arginine repressor from Vibrio vulnificus (strain CMCP6).